The chain runs to 469 residues: Diaminopimelate decarboxylase (469 aa).

Residues 1 to 23 form a disordered region; the sequence is MLSTEMPLPTTGSTLLKTPASPS. Lysine 93 carries the N6-(pyridoxal phosphate)lysine modification. Residues glycine 279 and 321 to 324 contribute to the pyridoxal 5'-phosphate site; that span reads EPGR. Residues arginine 324, arginine 361, and tyrosine 365 each contribute to the substrate site. Cysteine 392 acts as the Proton donor in catalysis. Positions 393 and 421 each coordinate substrate. Position 421 (tyrosine 421) interacts with pyridoxal 5'-phosphate.

It belongs to the Orn/Lys/Arg decarboxylase class-II family. LysA subfamily. Homodimer. It depends on pyridoxal 5'-phosphate as a cofactor.

It carries out the reaction meso-2,6-diaminopimelate + H(+) = L-lysine + CO2. It participates in amino-acid biosynthesis; L-lysine biosynthesis via DAP pathway; L-lysine from DL-2,6-diaminopimelate: step 1/1. Its function is as follows. Specifically catalyzes the decarboxylation of meso-diaminopimelate (meso-DAP) to L-lysine. This chain is Diaminopimelate decarboxylase, found in Synechocystis sp. (strain ATCC 27184 / PCC 6803 / Kazusa).